A 459-amino-acid polypeptide reads, in one-letter code: MSVLLFGVSHRSAPVSVLEQLSIDESDHGKIVDRVLQSPLVTEAMVLSTCNRVEVYAVVDAFHGGLAVIGQVLSDHSGMSMSDLTKYAYVRYSEAAVEHLFAVASGLDSAVIGEQQVLGQVRRAYATAETNRTVGRVLHELAQRALSVGKRVHSETAIDAAGASVVSVALDMADRRLGGLAGKTAVLVGAGAMGALAAAHLSRAGIGQVHVLNRSLSRAQRLVRKIRETGVRADALPLEHLADALAGADVVVSCTGAVSPVVSLADVHHALAAAGRSAADETAHPLVICDLGMPRDVDPAVAGLPGVWVVDVDRVQHEPSAHAAAADVDAARTIVATEVAAYLAGQRMAEVTPTVTALRQRAADVVEAELLRLDNRLPGLDSAHREEVARTVRRVVDKLLHAPTVRIKQLASAPGGDSYAEALRELFELDQTAVDAVAAGELPVIATGFDAGAPQQPTE.

Substrate is bound by residues 49-52, S109, 114-116, and Q120; these read TCNR and EQQ. The active-site Nucleophile is the C50. 189–194 is a binding site for NADP(+); it reads GAGAMG.

It belongs to the glutamyl-tRNA reductase family. In terms of assembly, homodimer.

It carries out the reaction (S)-4-amino-5-oxopentanoate + tRNA(Glu) + NADP(+) = L-glutamyl-tRNA(Glu) + NADPH + H(+). It functions in the pathway porphyrin-containing compound metabolism; protoporphyrin-IX biosynthesis; 5-aminolevulinate from L-glutamyl-tRNA(Glu): step 1/2. Its function is as follows. Catalyzes the NADPH-dependent reduction of glutamyl-tRNA(Glu) to glutamate 1-semialdehyde (GSA). This chain is Glutamyl-tRNA reductase, found in Mycolicibacterium paratuberculosis (strain ATCC BAA-968 / K-10) (Mycobacterium paratuberculosis).